We begin with the raw amino-acid sequence, 130 residues long: Small ribosomal subunit protein uS8 (130 aa).

Belongs to the universal ribosomal protein uS8 family. In terms of assembly, part of the 30S ribosomal subunit. Contacts proteins S5 and S12.

In terms of biological role, one of the primary rRNA binding proteins, it binds directly to 16S rRNA central domain where it helps coordinate assembly of the platform of the 30S subunit. This Pseudoalteromonas atlantica (strain T6c / ATCC BAA-1087) protein is Small ribosomal subunit protein uS8.